The following is a 124-amino-acid chain: Fluoride-specific ion channel FluC (124 aa).

3 consecutive transmembrane segments (helical) span residues Leu5–Gln27, Val70–Ile90, and Trp95–Leu115. Residues Gly74 and Thr77 each coordinate Na(+).

The protein belongs to the fluoride channel Fluc/FEX (TC 1.A.43) family.

The protein resides in the cell inner membrane. It catalyses the reaction fluoride(in) = fluoride(out). With respect to regulation, na(+) is not transported, but it plays an essential structural role and its presence is essential for fluoride channel function. Its function is as follows. Fluoride-specific ion channel. Important for reducing fluoride concentration in the cell, thus reducing its toxicity. This chain is Fluoride-specific ion channel FluC, found in Shewanella sediminis (strain HAW-EB3).